A 536-amino-acid chain; its full sequence is Keratin, type II cytoskeletal 4 (536 aa).

A head region spans residues 1-145 (MISRQSSVRG…DPEIQKIRTA (145 aa)). Residue Arg-13 is modified to Omega-N-methylarginine. Residues 146–181 (EREQIKTLNNKFASFIDKVRFLEQQNKVLETKWNLL) form a coil 1A region. The 312-residue stretch at 146-457 (EREQIKTLNN…KLLEGEECRM (312 aa)) folds into the IF rod domain. The segment at 182–200 (QQQTTTTSPRNLDPFFETY) is linker 1. The coil 1B stretch occupies residues 201–293 (INALRKNLDT…LYEAELSQMQ (93 aa)). The tract at residues 294–316 (THVSDTSVVLSMDNNRNLDLDGI) is linker 12. The coil 2 stretch occupies residues 317 to 454 (IAEVRAQYEE…TYRKLLEGEE (138 aa)). The tract at residues 455–524 (CRMSGECKSA…TSSATITKRS (70 aa)) is tail. A disordered region spans residues 515 to 536 (TSSATITKRSPRTRQDPDGLQP). Positions 527–536 (TRQDPDGLQP) are enriched in basic and acidic residues.

The protein belongs to the intermediate filament family. In terms of assembly, heterotetramer of two type I and two type II keratins. keratin-4 is generally associated with keratin-13.

The protein is Keratin, type II cytoskeletal 4 of Rattus norvegicus (Rat).